The primary structure comprises 328 residues: Interleukin-12 subunit beta (328 aa).

An N-terminal signal peptide occupies residues 1-22 (MCHQQLVISWFSLVFLASPLVA). The Ig-like C2-type domain maps to 23–106 (IWELKKDVYV…LSHSLLLLHK (84 aa)). Intrachain disulfides connect Cys50/Cys90, Cys131/Cys142, and Cys170/Cys193. Asn135 is a glycosylation site (N-linked (GlcNAc...) asparagine). N-linked (GlcNAc...) asparagine glycosylation occurs at Asn222. The Fibronectin type-III domain occupies 237–328 (PPKNLQLKPL…WSEWASVPCS (92 aa)). Residues Cys300 and Cys327 are joined by a disulfide bond. A C-linked (Man) tryptophan glycan is attached at Trp319.

It belongs to the IL-12B family. In terms of assembly, heterodimer with IL12A; disulfide-linked. The heterodimer is known as interleukin IL-12. Heterodimer with IL23A; disulfide-linked. The heterodimer is known as interleukin IL-23. Also secreted as a monomer. Interacts with NBR1; this interaction promotes IL-12 secretion. Post-translationally, known to be C-mannosylated in the recombinant protein; it is not yet known for sure if the wild-type protein is also modified.

The protein resides in the secreted. Cytokine that can act as a growth factor for activated T and NK cells, enhance the lytic activity of NK/lymphokine-activated killer cells, and stimulate the production of IFN-gamma by resting PBMC. Functionally, associates with IL23A to form the IL-23 interleukin, a heterodimeric cytokine which functions in innate and adaptive immunity. IL-23 may constitute with IL-17 an acute response to infection in peripheral tissues. IL-23 binds to a heterodimeric receptor complex composed of IL12RB1 and IL23R, activates the Jak-Stat signaling cascade, stimulates memory rather than naive T-cells and promotes production of pro-inflammatory cytokines. IL-23 induces autoimmune inflammation and thus may be responsible for autoimmune inflammatory diseases and may be important for tumorigenesis. The protein is Interleukin-12 subunit beta (IL12B) of Homo sapiens (Human).